The following is a 322-amino-acid chain: Porphobilinogen deaminase (322 aa).

Cys-252 bears the S-(dipyrrolylmethanemethyl)cysteine mark.

The protein belongs to the HMBS family. As to quaternary structure, monomer. Dipyrromethane is required as a cofactor.

The catalysed reaction is 4 porphobilinogen + H2O = hydroxymethylbilane + 4 NH4(+). It participates in porphyrin-containing compound metabolism; protoporphyrin-IX biosynthesis; coproporphyrinogen-III from 5-aminolevulinate: step 2/4. Functionally, tetrapolymerization of the monopyrrole PBG into the hydroxymethylbilane pre-uroporphyrinogen in several discrete steps. This chain is Porphobilinogen deaminase, found in Caulobacter vibrioides (strain ATCC 19089 / CIP 103742 / CB 15) (Caulobacter crescentus).